The sequence spans 2194 residues: PDZ and LIM domain protein Zasp (2194 aa).

The PDZ domain maps to 8–90 (QIKLSRFDAQ…NFVITVQRGG (83 aa)). The disordered stretch occupies residues 211–277 (TGQSTPAFGN…KPPSTGGLPT (67 aa)). Positions 228–253 (PQQLQQPQQQYNQHQQHYHQQQQQQQ) are enriched in low complexity. Residues 280-339 (NICTECERLITGVFVRIKDKNLHVECFKCATCGTSLKNQGYYNFNNKLYCDIHAKQAAIN) form the LIM zinc-binding 1 domain. The span at 415-435 (AATPQAATATDSPAATASSSD) shows a compositional bias: low complexity. Disordered regions lie at residues 415–436 (AATP…SSDN), 457–476 (VALA…DQPF), 511–558 (GAAA…AVEE), 580–611 (SRQS…YIPP), 623–692 (VQQV…TTSE), 896–940 (AAAA…PRGS), 1223–1260 (LTQK…QRTQ), 1297–1322 (QSQS…PPAN), 1550–1632 (LNAS…QQPE), 1646–1738 (QREQ…YGKT), and 1815–1837 (APPP…SGYQ). A compositionally biased stretch (low complexity) spans 515 to 530 (PKSPVSYPPQQQQQSP). Composition is skewed to polar residues over residues 580-590 (SRQSQRGSSFT) and 644-667 (VGTS…TASA). A compositionally biased stretch (low complexity) spans 676 to 692 (SSDSYTSTSTTTTTTSE). A compositionally biased stretch (polar residues) spans 1598 to 1610 (QTGSITTGQSYQG). Composition is skewed to low complexity over residues 1616 to 1630 (SEQS…YNQQ), 1646 to 1668 (QREQ…TRSQ), and 1699 to 1727 (SQSV…QNQS). LIM zinc-binding domains lie at 2018-2078 (PLCN…KYLA), 2079-2138 (PTCS…LFTT), and 2139-2194 (KCFA…NHAR).

As to quaternary structure, interacts with alpha-actinin (Actn). As to expression, expression is first detected in the proctodeum and the midgut primordium. In stage 11 embryos, expression is predominant in the leading edge of epidermal cells adjacent to the amnioserosa. Stage 12 embryos exhibit expression in the midgut and the leading edge. Expressed in several rows of germ band cells next to the leading edge at stage 14. Strong expression is visible in the midgut and pharyngeal muscles of stage 17 embryos. Also expressed in somatic muscles and visceral mesoderm. Colocalizes with mys (beta PS integrin) in myotendinous junctions and with Actn in muscle Z lines.

Its subcellular location is the cytoplasm. It is found in the cytoskeleton. Functionally, regulator of cell matrix adhesion having two related functions, one upstream of Actn organizing the Z line and the other downstream of integrins regulating assembly of integrin adhesion sites. Also required for the formation of myotendinous junctions in muscles. The polypeptide is PDZ and LIM domain protein Zasp (Zasp52) (Drosophila melanogaster (Fruit fly)).